A 171-amino-acid polypeptide reads, in one-letter code: Large ribosomal subunit protein uL15 (171 aa).

Residues 1 to 10 are compositionally biased toward polar residues; it reads MKLNEISDNN. Disordered stretches follow at residues 1–44 and 150–171; these read MKLN…RSGV and LPEAQPSEQEKKAARREANKAK. Positions 21–35 are enriched in gly residues; that stretch reads RGIGSGKGKTAGRGQ. Basic and acidic residues predominate over residues 157–171; it reads EQEKKAARREANKAK.

Belongs to the universal ribosomal protein uL15 family. In terms of assembly, part of the 50S ribosomal subunit.

Functionally, binds to the 23S rRNA. The protein is Large ribosomal subunit protein uL15 of Novosphingobium aromaticivorans (strain ATCC 700278 / DSM 12444 / CCUG 56034 / CIP 105152 / NBRC 16084 / F199).